A 277-amino-acid polypeptide reads, in one-letter code: Methyltransferase str3 (277 aa).

It belongs to the methyltransferase superfamily. LaeA methyltransferase family.

The protein operates within mycotoxin biosynthesis. Its function is as follows. Methyltransferase; part of the gene cluster that mediates the biosynthesis of strobilurin A, an antifungal polyketide that contains a key beta-methoxyacrylate toxophore that targets the complex III of the mitochondrial electron transport chain. Strobilurin biosynthesis begins with construction of benzoyl CoA by step-wise elimination of ammonia from phenylalanine by the phenylalanine ammonia-lyase str11, oxygenation by str8 and retro-Claisen reaction to form benzoic acid, which is activated to its CoA thiolester benzoyl CoA by the dedicated CoA ligase str10. Benzoyl CoA forms the starter unit for the highly reducing polyketide synthase stpks1 that produces the polyketide prestrobilutin A. The FAD-dependent oxygenase str9 then catalyzes the key oxidative rearrangement responsible for the creation of the beta-methoxyacrylate toxophore. Str9 performs epoxidation of the 2,3 olefin of prestrobilutin A, followed by Meinwald rearrangement to furnish the aldehyde intermediate. Rapid enolization of the aldehyde intermediate would give the beta-methoxyacrylate skeleton and methylations catalyzed by str2 and str3 complete the synthesis and lead to the production of strobilurin A. The short-chain dehydrogenase stl2 and the dehydrogenase str4 play a role in the shunt pathway leading to the production of bolineol. The cluster encodes no obvious halogenase gene that could be involved in production of strobilurin B, nor any obvious dimethylallyl-transferase that could be involved in the production of strobilurin G. It is possible that unknown proteins encoded in, or near, the cluster (such as str1 or stl1) may form new classes of halogenases or dimethylally-transferases, or that the responsible genes are located elsewhere on the genome. Similarly, proteins encoded by str5/str6 hydrolases appear to have no chemical role in the biosynthesis of strobilurin A. Finally, no obvious self-resistance gene is found within the cluster. The protein is Methyltransferase str3 of Strobilurus tenacellus.